The chain runs to 435 residues: rRNA methyltransferase 3A, mitochondrial (435 aa).

The N-terminal 42 residues, 1-42 (MAALMYNVSRGLVMLGERSLFQRERYQILVNSRRFLRGLRRR), are a transit peptide targeting the mitochondrion. Residues 314–324 (KQLVSGQTENV) show a composition bias toward polar residues. The segment at 314-351 (KQLVSGQTENVSSDDYSESDSDDDDDEEEDEDSLPHVK) is disordered. Over residues 328–345 (DYSESDSDDDDDEEEDED) the composition is skewed to acidic residues. Positions 369 and 402 each coordinate S-adenosyl-L-methionine.

Belongs to the class IV-like SAM-binding methyltransferase superfamily. RNA methyltransferase TrmH family.

The protein resides in the mitochondrion. It carries out the reaction a uridine in rRNA + S-adenosyl-L-methionine = a 2'-O-methyluridine in rRNA + S-adenosyl-L-homocysteine + H(+). Functionally, S-adenosyl-L-methionine-dependent 2'-O-ribose methyltransferase that catalyzes the formation of 2'-O-methylguanosine at position 1485 (Gm1485) in the mitochondrial large subunit ribosomal RNA (mtLSU rRNA), a conserved modification in the peptidyl transferase domain of the mtLSU rRNA. Also required for formation of 2'-O-methyluridine at position 1484 (Um1484) mediated by MRM2. This chain is rRNA methyltransferase 3A, mitochondrial (mrm3a), found in Danio rerio (Zebrafish).